Here is a 159-residue protein sequence, read N- to C-terminus: Carbohydrate sulfotransferase 15 (159 aa).

The Lumenal segment spans residues 1 to 159 (SGTTDFYRRI…YQPHNERLVK (159 aa)). 2 N-linked (GlcNAc...) asparagine glycosylation sites follow: Asn-42 and Asn-112.

Belongs to the sulfotransferase 1 family. The cofactor is a divalent metal cation. Glutathione is required as a cofactor.

The protein localises to the golgi apparatus membrane. The enzyme catalyses dermatan 4'-sulfate + n 3'-phosphoadenylyl sulfate = dermatan 4',6'-bissulfate + n adenosine 3',5'-bisphosphate + n H(+). It catalyses the reaction chondroitin 4'-sulfate + n 3'-phosphoadenylyl sulfate = chondroitin 4',6'-bissulfate + n adenosine 3',5'-bisphosphate + n H(+). In terms of biological role, sulfotransferase that transfers sulfate from 3'-phosphoadenosine 5'-phosphosulfate (PAPS) to the C-6 hydroxyl group of the GalNAc 4-sulfate residue of chondroitin sulfate A and forms chondroitin sulfate E containing GlcA-GalNAc(4,6-SO(4)) repeating units. In Nototodarus sloanii (Wellington flying squid), this protein is Carbohydrate sulfotransferase 15 (GALNAC4S6ST).